We begin with the raw amino-acid sequence, 432 residues long: Glutamate-1-semialdehyde 2,1-aminomutase (432 aa).

Lys272 is subject to N6-(pyridoxal phosphate)lysine.

The protein belongs to the class-III pyridoxal-phosphate-dependent aminotransferase family. HemL subfamily. In terms of assembly, homodimer. Pyridoxal 5'-phosphate is required as a cofactor.

The protein localises to the cytoplasm. It catalyses the reaction (S)-4-amino-5-oxopentanoate = 5-aminolevulinate. It functions in the pathway porphyrin-containing compound metabolism; protoporphyrin-IX biosynthesis; 5-aminolevulinate from L-glutamyl-tRNA(Glu): step 2/2. The protein operates within porphyrin-containing compound metabolism; chlorophyll biosynthesis. This is Glutamate-1-semialdehyde 2,1-aminomutase from Acaryochloris marina (strain MBIC 11017).